The sequence spans 199 residues: Glycerol-3-phosphate acyltransferase (199 aa).

A run of 5 helical transmembrane segments spans residues 3–23, 50–70, 77–97, 110–130, and 136–156; these read YILI…YLLP, VIGF…VLVF, IHYT…PVFL, GVFF…WISI, and YVSL…FFFN.

It belongs to the PlsY family. In terms of assembly, probably interacts with PlsX.

The protein localises to the cell inner membrane. The enzyme catalyses an acyl phosphate + sn-glycerol 3-phosphate = a 1-acyl-sn-glycero-3-phosphate + phosphate. It functions in the pathway lipid metabolism; phospholipid metabolism. Its function is as follows. Catalyzes the transfer of an acyl group from acyl-phosphate (acyl-PO(4)) to glycerol-3-phosphate (G3P) to form lysophosphatidic acid (LPA). This enzyme utilizes acyl-phosphate as fatty acyl donor, but not acyl-CoA or acyl-ACP. The chain is Glycerol-3-phosphate acyltransferase from Pseudothermotoga lettingae (strain ATCC BAA-301 / DSM 14385 / NBRC 107922 / TMO) (Thermotoga lettingae).